Here is a 527-residue protein sequence, read N- to C-terminus: Endogenous retrovirus group FC1 member 1 Env polyprotein (527 aa).

The segment at 1–411 is surface protein; the sequence is MNSPCDRLQQ…EPRPQNKSKW (411 aa). Residues 280–283 carry the CXXC motif; sequence CFLC. The segment at 412 to 432 is fusion peptide; it reads AIFLPLVLGISLASSLVASGL. Positions 412–527 are transmembrane protein; the sequence is AIFLPLVLGI…LKKKKSSKRS (116 aa). Positions 477 to 493 match the CKS-17 motif; sequence AQNRQALDLLMAEKGRT. Cys494 and Cys501 are joined by a disulfide. The CX6CC signature appears at 494–502; the sequence is CLFLQEECC.

The protein belongs to the gamma type-C retroviral envelope protein family. HERV class-I F(c)2 env subfamily. Post-translationally, the CXXC motif is highly conserved across a broad range of retroviral envelope proteins. It is thought to participate in the formation of a labile disulfide bond possibly with the CX6CC motif present in the transmembrane domain. In terms of tissue distribution, low expression in skin and testis.

It localises to the virion. In terms of biological role, retroviral envelope proteins mediate receptor recognition and membrane fusion during early infection. Endogenous envelope proteins may have kept, lost or modified their original function during evolution. This endogenous envelope protein has lost its original fusogenic properties. The chain is Endogenous retrovirus group FC1 member 1 Env polyprotein (ERVFC1-1) from Homo sapiens (Human).